Reading from the N-terminus, the 657-residue chain is Methionine--tRNA ligase (657 aa).

Positions 13–23 match the 'HIGH' region motif; sequence YYPSGNLHIGH. The short motif at 308-312 is the 'KMSKS' region element; it reads KMSKS. Residue K311 coordinates ATP. A tRNA-binding domain is found at 557–657; the sequence is DFDKVEIKAA…SAIPNGAVIK (101 aa).

This sequence belongs to the class-I aminoacyl-tRNA synthetase family. MetG type 2B subfamily. Homodimer.

Its subcellular location is the cytoplasm. It catalyses the reaction tRNA(Met) + L-methionine + ATP = L-methionyl-tRNA(Met) + AMP + diphosphate. Its function is as follows. Is required not only for elongation of protein synthesis but also for the initiation of all mRNA translation through initiator tRNA(fMet) aminoacylation. This chain is Methionine--tRNA ligase, found in Staphylococcus aureus (strain COL).